The sequence spans 110 residues: UPF0060 membrane protein Pmen_1247 (110 aa).

4 consecutive transmembrane segments (helical) span residues 5–25 (LWFLLAAVFEIAGCYAFWMWL), 31–51 (AWWIAPGLLSLVLFALILTRV), 59–79 (AYAAYGGVYIVASLAWLALIE), and 84–104 (MLSDWLGAALCLAGAAIILFA).

The protein belongs to the UPF0060 family.

The protein resides in the cell inner membrane. The protein is UPF0060 membrane protein Pmen_1247 of Ectopseudomonas mendocina (strain ymp) (Pseudomonas mendocina).